Here is a 422-residue protein sequence, read N- to C-terminus: Tyrosine--tRNA ligase 1 (422 aa).

Residue tyrosine 36 coordinates L-tyrosine. The 'HIGH' region signature appears at 41-50 (PTAGSLHIGH). The L-tyrosine site is built by tyrosine 173 and glutamine 177. Positions 233-237 (KFGKT) match the 'KMSKS' region motif. ATP is bound at residue lysine 236. Positions 355-419 (SDVVTLLLET…GKKQFAMVKL (65 aa)) constitute an S4 RNA-binding domain.

This sequence belongs to the class-I aminoacyl-tRNA synthetase family. TyrS type 1 subfamily. Homodimer.

It is found in the cytoplasm. It catalyses the reaction tRNA(Tyr) + L-tyrosine + ATP = L-tyrosyl-tRNA(Tyr) + AMP + diphosphate + H(+). Its function is as follows. Catalyzes the attachment of tyrosine to tRNA(Tyr) in a two-step reaction: tyrosine is first activated by ATP to form Tyr-AMP and then transferred to the acceptor end of tRNA(Tyr). The polypeptide is Tyrosine--tRNA ligase 1 (Vibrio vulnificus (strain CMCP6)).